We begin with the raw amino-acid sequence, 1186 residues long: Trafficking protein particle complex II-specific subunit 120 homolog (1186 aa).

2 disordered regions span residues 777 to 824 (PTDS…EKES) and 964 to 984 (TKDPPPGSPSSSRNPSFSEKN). The span at 779–792 (DSDNTMSSGRNAAG) shows a compositional bias: polar residues. S971 carries the post-translational modification Phosphoserine. Over residues 972–981 (PSSSRNPSFS) the composition is skewed to low complexity.

It belongs to the TRS120 family. In terms of assembly, part of the multisubunit TRAPP (transport protein particle) II complex composed of BET3, BET5, TRS20, TRS23, TRS31, TRS33, TRS65, TRS85, TRS120 and TRS130. In terms of tissue distribution, expressed in roots, leaves, stems and flowers.

The protein resides in the golgi apparatus. The protein localises to the trans-Golgi network. It localises to the early endosome. Functionally, specific subunit of the TRAPP II complex, a highly conserved vesicle tethering complex that is required for the proper transport of proteins in post-Golgi trafficking pathways to the growing cell plate in mitotic active cells. Required for the polarized and selective transport of PIN2 and probably PIN1 to the plasma membrane. Not required for ER-to-Golgi as well as biosynthetic and endocytic vacuolar transport. In Arabidopsis thaliana (Mouse-ear cress), this protein is Trafficking protein particle complex II-specific subunit 120 homolog.